We begin with the raw amino-acid sequence, 264 residues long: Thymidylate synthase (264 aa).

R21 contributes to the dUMP binding site. H51 contacts (6R)-5,10-methylene-5,6,7,8-tetrahydrofolate. 126-127 (RR) contributes to the dUMP binding site. C146 (nucleophile) is an active-site residue. DUMP is bound by residues 166-169 (RSGD), N177, and 207-209 (HIY). D169 serves as a coordination point for (6R)-5,10-methylene-5,6,7,8-tetrahydrofolate. A263 lines the (6R)-5,10-methylene-5,6,7,8-tetrahydrofolate pocket.

Belongs to the thymidylate synthase family. Bacterial-type ThyA subfamily. Homodimer.

It localises to the cytoplasm. It carries out the reaction dUMP + (6R)-5,10-methylene-5,6,7,8-tetrahydrofolate = 7,8-dihydrofolate + dTMP. The protein operates within pyrimidine metabolism; dTTP biosynthesis. In terms of biological role, catalyzes the reductive methylation of 2'-deoxyuridine-5'-monophosphate (dUMP) to 2'-deoxythymidine-5'-monophosphate (dTMP) while utilizing 5,10-methylenetetrahydrofolate (mTHF) as the methyl donor and reductant in the reaction, yielding dihydrofolate (DHF) as a by-product. This enzymatic reaction provides an intracellular de novo source of dTMP, an essential precursor for DNA biosynthesis. The polypeptide is Thymidylate synthase (Sinorhizobium medicae (strain WSM419) (Ensifer medicae)).